The chain runs to 217 residues: Adenylate kinase (217 aa).

Position 10–15 (10–15 (GAGKGT)) interacts with ATP. The tract at residues 30 to 59 (STGDMFRAAMKNETELGLKAKSFIDAGDLV) is NMP. AMP contacts are provided by residues Thr-31, Arg-36, 57-59 (DLV), 85-88 (GFPR), and Gln-92. Residues 126–163 (GRRVSPTTGKTYHIVYNPPKVEGKCDIDGSDLIQRDDD) are LID. Residues Arg-127 and 136–137 (TY) each bind ATP. AMP contacts are provided by Arg-160 and Arg-171. Position 199 (Gln-199) interacts with ATP.

It belongs to the adenylate kinase family. In terms of assembly, monomer.

The protein localises to the cytoplasm. It carries out the reaction AMP + ATP = 2 ADP. The protein operates within purine metabolism; AMP biosynthesis via salvage pathway; AMP from ADP: step 1/1. Catalyzes the reversible transfer of the terminal phosphate group between ATP and AMP. Plays an important role in cellular energy homeostasis and in adenine nucleotide metabolism. The chain is Adenylate kinase from Shouchella clausii (strain KSM-K16) (Alkalihalobacillus clausii).